The following is a 71-amino-acid chain: Small ribosomal subunit protein eS17 (71 aa).

This sequence belongs to the eukaryotic ribosomal protein eS17 family.

The protein is Small ribosomal subunit protein eS17 of Pyrobaculum aerophilum (strain ATCC 51768 / DSM 7523 / JCM 9630 / CIP 104966 / NBRC 100827 / IM2).